The primary structure comprises 397 residues: MTAAIYLVKGREKSVKRKHPWIFSRGISKVEGEPALGETVDVFTHDGKWLAKAAYSPASQIRARIWSFEKEEINKAFFVKRFNNAQLLREDIIERDGLTGYRLIAAESDGMPGVTIDRYQNFFVCQLLSAGAEYNKQAIVDALVECFPDCNVYERSDVAVRKKEGLKETTGVLHGEEPPKSVVIEENGVKISVDIVGGHKTGFYLDQRDSRQQAMKYVKDKEVLNCFSYTGGFGLYALKGGAKRVINADVSQPALDTAKFNAELNEFDISKKRAVFLNADVFKLLREYRDQGTKFDVVIMDPPKFAESKAQLNGACRGYKDINMLAMQILNPGGTLLTYSCSGLMDQVLFQKIIADAAVDANRQVKFVERFEQAADHPTDTAYPEGFYLKGFACKVL.

The region spanning 2-79 (TAAIYLVKGR…KEEINKAFFV (78 aa)) is the PUA domain.

It belongs to the methyltransferase superfamily. RlmI family.

The protein localises to the cytoplasm. It carries out the reaction cytidine(1962) in 23S rRNA + S-adenosyl-L-methionine = 5-methylcytidine(1962) in 23S rRNA + S-adenosyl-L-homocysteine + H(+). Functionally, specifically methylates the cytosine at position 1962 (m5C1962) of 23S rRNA. This chain is Ribosomal RNA large subunit methyltransferase I, found in Vibrio campbellii (strain ATCC BAA-1116).